The primary structure comprises 504 residues: Sodium-coupled neutral amino acid symporter 2 (504 aa).

The tract at residues 1–23 (MKKTEMGRFNISPDEDSSSYSSN) is disordered. Topologically, residues 1 to 76 (MKKTEMGRFN…HPGTTSFGMS (76 aa)) are cytoplasmic. The regulates protein turnover upon amino acid deprivation stretch occupies residues 1–96 (MKKTEMGRFN…SGILGLSYAM (96 aa)). Phosphoserine occurs at positions 12, 21, 22, and 55. Residues 77–96 (VFNLSNAIVGSGILGLSYAM) traverse the membrane as a helical segment. Asn-82 is a binding site for Na(+). The Extracellular segment spans residues 97-102 (ANTGIA). Residues 103 to 123 (LFIILLTFVSIFSLYSVHLLL) traverse the membrane as a helical segment. Residues 124–158 (KTANEGGSLLYEQLGHKAYGLAGKLAASGSITMQN) are Cytoplasmic-facing. Residues 159 to 177 (IGAMSSYLFIVKYELPLVI) traverse the membrane as a helical segment. Residues 178 to 188 (KALMNIEDTNG) are Extracellular-facing. The helical transmembrane segment at 189-209 (LWYLNGDYLVLLVSLVLILPL) threads the bilayer. The Cytoplasmic portion of the chain corresponds to 210–217 (SLLRNLGY). A helical transmembrane segment spans residues 218–238 (LGYTSGLSLLCMIFFLIVVIC). Topologically, residues 239–289 (KKFQIPCPVEAALVANETVNGTFTQAALALAFNSTADDACRPRYFIFNSQT) are extracellular. Cys-245 and Cys-278 form a disulfide bridge. N-linked (GlcNAc...) asparagine glycosylation is found at Asn-254 and Asn-258. Residues 290 to 310 (VYAVPILTFSFVCHPAVLPIY) form a helical membrane-spanning segment. At 311 to 326 (EELKSRSRRRMMNVSK) the chain is on the cytoplasmic side. The chain crosses the membrane as a helical span at residues 327–347 (ISFFAMFLMYLLAALFGYLTF). At 348-368 (YGHVESELLHTYSEIVGTDIL) the chain is on the extracellular side. Residues 369–389 (LLVVRLAVLVAVTLTVPVVIF) traverse the membrane as a helical segment. Residue Thr-383 coordinates Na(+). The Cytoplasmic portion of the chain corresponds to 390–410 (PIRSSVTHLLCPTKEFSWLRH). A helical membrane pass occupies residues 411 to 431 (SIITVTILSFTNLLVIFVPTI). The Extracellular portion of the chain corresponds to 432–433 (RD). A helical membrane pass occupies residues 434–454 (IFGFIGASAAAMLIFILPSAF). Residues 455-469 (YIKLVKKEPMRSVQK) are Cytoplasmic-facing. The chain crosses the membrane as a helical span at residues 470-492 (IGALCFLLSGIVVMIGSMGLIVL). At 493–504 (DWVHDASAAGGH) the chain is on the extracellular side.

It belongs to the amino acid/polyamine transporter 2 family. In terms of processing, polyubiquitination by NEDD4L regulates the degradation and the activity of SLC38A2. In terms of tissue distribution, expressed in cerebral and cerebellar astrocytes and neurons.

The protein resides in the cell membrane. The enzyme catalyses L-alanine(in) + Na(+)(in) = L-alanine(out) + Na(+)(out). The catalysed reaction is glycine(in) + Na(+)(in) = glycine(out) + Na(+)(out). It carries out the reaction L-serine(in) + Na(+)(in) = L-serine(out) + Na(+)(out). It catalyses the reaction L-proline(in) + Na(+)(in) = L-proline(out) + Na(+)(out). The enzyme catalyses L-methionine(in) + Na(+)(in) = L-methionine(out) + Na(+)(out). The catalysed reaction is L-histidine(in) + Na(+)(in) = L-histidine(out) + Na(+)(out). It carries out the reaction L-asparagine(in) + Na(+)(in) = L-asparagine(out) + Na(+)(out). It catalyses the reaction L-glutamine(in) + Na(+)(in) = L-glutamine(out) + Na(+)(out). The enzyme catalyses L-threonine(in) + Na(+)(in) = L-threonine(out) + Na(+)(out). The catalysed reaction is L-leucine(in) + Na(+)(in) = L-leucine(out) + Na(+)(out). It carries out the reaction L-phenylalanine(in) + Na(+)(in) = L-phenylalanine(out) + Na(+)(out). Its activity is regulated as follows. Inhibited by N-methyl-D-glucamine. Inhibited by choline. Allosteric regulation of sodium ions binding by pH. In terms of biological role, symporter that cotransports neutral amino acids and sodium ions from the extracellular to the intracellular side of the cell membrane. The transport is pH-sensitive, Li(+)-intolerant, electrogenic, driven by the Na(+) electrochemical gradient and cotransports of neutral amino acids and sodium ions with a stoichiometry of 1:1. May function in the transport of amino acids at the blood-brain barrier. May function in the transport of amino acids in the supply of maternal nutrients to the fetus through the placenta. Maintains a key metabolic glutamine/glutamate balance underpinning retrograde signaling by dendritic release of the neurotransmitter glutamate. Transports L-proline in differentiating osteoblasts for the efficient synthesis of proline-enriched proteins and provides proline essential for osteoblast differentiation and bone formation during bone development. The polypeptide is Sodium-coupled neutral amino acid symporter 2 (Mus musculus (Mouse)).